Consider the following 382-residue polypeptide: Chaperone protein DnaJ (382 aa).

In terms of domain architecture, J spans 5-70 (DYYELLGVQK…EKRAAYDRYG (66 aa)). A CR-type zinc finger spans residues 146–224 (GAEKEISFRK…CHGEGRVRRT (79 aa)). 8 residues coordinate Zn(2+): C159, C162, C176, C179, C198, C201, C212, and C215. 4 CXXCXGXG motif repeats span residues 159–166 (CERCDGSG), 176–183 (CPTCRGAG), 198–205 (CPTCGGMG), and 212–219 (CTVCHGEG). Residues 230 to 250 (RIPPGVDNGSRLRSSGNGEAG) form a disordered region.

This sequence belongs to the DnaJ family. In terms of assembly, homodimer. The cofactor is Zn(2+).

It is found in the cytoplasm. Participates actively in the response to hyperosmotic and heat shock by preventing the aggregation of stress-denatured proteins and by disaggregating proteins, also in an autonomous, DnaK-independent fashion. Unfolded proteins bind initially to DnaJ; upon interaction with the DnaJ-bound protein, DnaK hydrolyzes its bound ATP, resulting in the formation of a stable complex. GrpE releases ADP from DnaK; ATP binding to DnaK triggers the release of the substrate protein, thus completing the reaction cycle. Several rounds of ATP-dependent interactions between DnaJ, DnaK and GrpE are required for fully efficient folding. Also involved, together with DnaK and GrpE, in the DNA replication of plasmids through activation of initiation proteins. In Opitutus terrae (strain DSM 11246 / JCM 15787 / PB90-1), this protein is Chaperone protein DnaJ.